Reading from the N-terminus, the 314-residue chain is 2-desacetyl-2-hydroxyethyl bacteriochlorophyllide A dehydrogenase (314 aa).

The protein operates within porphyrin-containing compound metabolism; bacteriochlorophyll biosynthesis (light-independent). In terms of biological role, this protein catalyzes the penultimate step in bacteriochlorophyll a biosynthesis. The sequence is that of 2-desacetyl-2-hydroxyethyl bacteriochlorophyllide A dehydrogenase (bchC) from Rhodobacter capsulatus (strain ATCC BAA-309 / NBRC 16581 / SB1003).